We begin with the raw amino-acid sequence, 142 residues long: Large ribosomal subunit protein uL11 (142 aa).

The protein belongs to the universal ribosomal protein uL11 family. Part of the ribosomal stalk of the 50S ribosomal subunit. Interacts with L10 and the large rRNA to form the base of the stalk. L10 forms an elongated spine to which L12 dimers bind in a sequential fashion forming a multimeric L10(L12)X complex. Post-translationally, one or more lysine residues are methylated.

In terms of biological role, forms part of the ribosomal stalk which helps the ribosome interact with GTP-bound translation factors. This is Large ribosomal subunit protein uL11 from Mycobacterium leprae (strain Br4923).